The following is a 276-amino-acid chain: Chlorophyll a-b binding protein CP29.3, chloroplastic (276 aa).

A chloroplast-targeting transit peptide spans 1 to 29; sequence MATTTAAAASGIFGIRIQDPRPGTGRVQA. The disordered stretch occupies residues 1-53; the sequence is MATTTAAAASGIFGIRIQDPRPGTGRVQARFGFSFGKKKPAPPPKKSRQVQDD. Positions 36–48 are enriched in basic residues; sequence GKKKPAPPPKKSR. Tryptophan 59 contributes to the chlorophyll b binding site. Chlorophyll a is bound by residues phenylalanine 79, glutamate 141, and histidine 144. Residues 147 to 167 form a helical membrane-spanning segment; that stretch reads WAMLGTLGAIAVEALTGIAWQ. Leucine 181 contributes to the chlorophyll a binding site. Residues 185-205 traverse the membrane as a helical segment; the sequence is LPFSLTTLIWIEVLVVGYIEF. Residues glutamate 204 and arginine 207 each coordinate chlorophyll b. Residues glutamate 242, histidine 245, arginine 247, and glutamine 259 each contribute to the chlorophyll a site. A helical transmembrane segment spans residues 248 to 268; the sequence is LAMVAFLIFALQAAFTGKGPV.

This sequence belongs to the light-harvesting chlorophyll a/b-binding (LHC) protein family. As to quaternary structure, the LHC complex consists of chlorophyll a-b binding proteins. Requires Binds at least 14 chlorophylls (8 Chl-a and 6 Chl-b) and carotenoids such as lutein and neoxanthin. as cofactor. Post-translationally, photoregulated by reversible phosphorylation of its threonine residues.

It localises to the plastid. The protein localises to the chloroplast thylakoid membrane. The light-harvesting complex (LHC) functions as a light receptor, it captures and delivers excitation energy to photosystems with which it is closely associated. This is Chlorophyll a-b binding protein CP29.3, chloroplastic (LHCB4.3) from Arabidopsis thaliana (Mouse-ear cress).